A 260-amino-acid chain; its full sequence is Achaete-scute homolog 2 (260 aa).

2 disordered regions span residues 85–126 and 191–239; these read AGAC…RNER and PATR…EDSS. Low complexity-rich tracts occupy residues 110-121 and 200-218; these read ATEASSSSAAVA and TQPSASPASASLSCTSTSP. The region spanning 118-170 is the bHLH domain; sequence AAVARRNERERNRVKLVNLGFQALRQHVPHGGANKKLSKVETLRSAVEYIRAL.

As to quaternary structure, efficient DNA binding requires dimerization with another bHLH protein. Forms heterodimers with bHLH transcription factor TCF3. May not heterodimerise with bHLH protein HAND1. As to expression, expressed in Schwann cells in the peripheral nerve (at protein level). Also expressed by endothelial cells (at protein level). May be expressed in neuronal precursor cells.

The protein resides in the nucleus. The protein localises to the cytoplasm. Functionally, transcription factor. Binds to E-box motifs 5'-CANNTG-3' in the regulatory elements of target genes, probably as a heterodimer with another basic helix-loop-helix (bHLH) protein such as the transcription factor TCF3. May bind both open and closed chromatin, acting as a pioneer transcription factor to allow other factors to bind and activate lineage-specific genes. Required during post-implantation development for the generation of some differentiated trophoblast cell types. Transcriptional activity of ASCL2 may be antagonised in a subset of trophoblast cells by bHLH transcription factor HAND1, perhaps by competing for dimerization with other bHLH proteins. Involved in differentiation and function of follicular T-helper (Tfh) cells, thereby playing a role in germinal center responses; probably modulates expression of genes involved in Tfh cell function, such as BCL6. May also act as a suppressor of Th1-, Th2- and Th17-cell differentiation. Induces the formation of stem cells in intestinal crypts in vitro, synergistically activating transcription of target genes, such as SOX9, together with TCF4/beta-catenin. May form a bistable transcriptional switch, controlling expression of its own gene together with Wnt/R-spondin signaling, and thereby maintaining stem cell characteristics. Modulates expression of target genes, including perhaps down-regulating EGR1/Krox24 and chemokine CXCL10/Mob-1 and up-regulating CXCR4 and CDKN1C/p57kip2, in Schwann cells. May play a role in reducing proliferation of Schwann cells, perhaps acting via modulation of expression of CDKN1C. May be dispensable for blastocyst formation and later embryonic function. May be involved in the determination of neuronal precursors. The chain is Achaete-scute homolog 2 (Ascl2) from Rattus norvegicus (Rat).